The primary structure comprises 318 residues: tRNA-modifying protein YgfZ (318 aa).

Residues Trp-28 and Trp-182 each contribute to the folate site.

Belongs to the tRNA-modifying YgfZ family.

The protein localises to the cytoplasm. Its function is as follows. Folate-binding protein involved in regulating the level of ATP-DnaA and in the modification of some tRNAs. It is probably a key factor in regulatory networks that act via tRNA modification, such as initiation of chromosomal replication. The protein is tRNA-modifying protein YgfZ of Aliivibrio fischeri (strain ATCC 700601 / ES114) (Vibrio fischeri).